We begin with the raw amino-acid sequence, 587 residues long: Zinc finger protein 496 (587 aa).

The tract at residues 1 to 40 (MPTALCPRVLAPKESEEPRKMRSPPGENPSPQGELPSPES) is disordered. The segment covering 11–20 (APKESEEPRK) has biased composition (basic and acidic residues). Residue Lys13 forms a Glycyl lysine isopeptide (Lys-Gly) (interchain with G-Cter in SUMO2) linkage. Positions 42-124 (RRLFRRFRYQ…AAVEALEREP (83 aa)) constitute an SCAN box domain. A Phosphoserine modification is found at Ser185. The KRAB domain occupies 221-291 (SPFKDMILCF…ELQDLQGKEV (71 aa)). Positions 260–282 (PPNDLAAQPDLSQGEENEPRVPE) are disordered. The residue at position 299 (Ser299) is a Phosphoserine. The tract at residues 358–399 (SSSGDEDSQHGPYCTEELGSPTEKQRSLPASHRSSTEAGGEV) is disordered. Polar residues predominate over residues 389–399 (HRSSTEAGGEV). Lys403 participates in a covalent cross-link: Glycyl lysine isopeptide (Lys-Gly) (interchain with G-Cter in SUMO2). The C2H2-type 1; degenerate zinc-finger motif lies at 406–428 (YVCPNCGKIFRWRVNFIRHLRSR). C2H2-type zinc fingers lie at residues 435 to 457 (HECSVCGELFSDSEDLDGHLESH) and 463 to 485 (YRCGACGKSFRLNSHLLSHRRIH). The interval 488 to 513 (PDRLQPVEKREQAASEDADKGPKEPL) is disordered. Lys496 participates in a covalent cross-link: Glycyl lysine isopeptide (Lys-Gly) (interchain with G-Cter in SUMO2). 2 C2H2-type zinc fingers span residues 522 to 545 (FQCCECGKAFQRHDHLARHRSHFH) and 553 to 575 (FQCRYCVKSFTQNYDLLRHERLH).

The protein belongs to the krueppel C2H2-type zinc-finger protein family. In terms of assembly, interacts (via zinc-fingers) with JARID2. Interacts with NSD1.

The protein localises to the nucleus. DNA-binding transcription factor that can both act as an activator and a repressor. This chain is Zinc finger protein 496 (ZNF496), found in Homo sapiens (Human).